The chain runs to 400 residues: MQSLLLALLLLPVCSPGGASNLHEDLTLLRTDLALRLYRSVAAAGNQTNLVLSPAGAFIPLELLQFGARGNTGRQLAQALGYTVHDPKVREWLQTVYAVLPSTNPGAKLELACTLYVQTGTPLAPCFVEQVSRWANSSLELANFREPNSTAMLANGWGPRQTAGDEPVGSAWERGGGAESAQLVLVSTVSFQSAWRHQFSSDTQLLPFTCAQGLTLEVPMMYQMAEVNFGQFQDPAGHQVGVLELPYLGNVASLLLVLPRDRDTPLSHIEPHLTASLLHAWTASLKRARMEVFLPRFRIQNHFDLKNILYSWGVIDLFDPLRANLKGISGQDGFYVSEAIHKAKIEVSEEGTKASAATALLLLKRSRIPIFKADRPFIFFLREPNTAFVFSIGRVLNPLH.

Residues 1–19 (MQSLLLALLLLPVCSPGGA) form the signal peptide. N-linked (GlcNAc...) asparagine glycosylation occurs at asparagine 46.

Belongs to the serpin family.

It localises to the secreted. In terms of biological role, probable serine protease inhibitor. In Bos taurus (Bovine), this protein is Serpin E3 (SERPINE3).